The sequence spans 163 residues: Lipoprotein signal peptidase (163 aa).

Transmembrane regions (helical) follow at residues 9–29 (YLAIAIIVLLLDQLSKWSALS), 39–59 (VLPFMNWLLLFNPGTAFSFLA), 67–87 (WFFTVLGLAASIYIIWMLYKS), and 92–112 (LLCIALSLILGGALGNVLDRV). Catalysis depends on residues aspartate 119 and aspartate 137. A helical transmembrane segment spans residues 130–150 (WPAFNIADSAICVGAALIIWG).

The protein belongs to the peptidase A8 family.

The protein localises to the cell inner membrane. It carries out the reaction Release of signal peptides from bacterial membrane prolipoproteins. Hydrolyzes -Xaa-Yaa-Zaa-|-(S,diacylglyceryl)Cys-, in which Xaa is hydrophobic (preferably Leu), and Yaa (Ala or Ser) and Zaa (Gly or Ala) have small, neutral side chains.. It participates in protein modification; lipoprotein biosynthesis (signal peptide cleavage). Functionally, this protein specifically catalyzes the removal of signal peptides from prolipoproteins. This chain is Lipoprotein signal peptidase, found in Polynucleobacter necessarius subsp. necessarius (strain STIR1).